We begin with the raw amino-acid sequence, 196 residues long: Protein GrpE (196 aa).

Residues Met1–Asp41 are disordered.

This sequence belongs to the GrpE family. As to quaternary structure, homodimer.

The protein resides in the cytoplasm. Functionally, participates actively in the response to hyperosmotic and heat shock by preventing the aggregation of stress-denatured proteins, in association with DnaK and GrpE. It is the nucleotide exchange factor for DnaK and may function as a thermosensor. Unfolded proteins bind initially to DnaJ; upon interaction with the DnaJ-bound protein, DnaK hydrolyzes its bound ATP, resulting in the formation of a stable complex. GrpE releases ADP from DnaK; ATP binding to DnaK triggers the release of the substrate protein, thus completing the reaction cycle. Several rounds of ATP-dependent interactions between DnaJ, DnaK and GrpE are required for fully efficient folding. The chain is Protein GrpE from Klebsiella pneumoniae subsp. pneumoniae (strain ATCC 700721 / MGH 78578).